The following is a 506-amino-acid chain: Histidine ammonia-lyase (506 aa).

Positions 144–146 (ASG) form a cross-link, 5-imidazolinone (Ala-Gly). Residue S145 is modified to 2,3-didehydroalanine (Ser).

It belongs to the PAL/histidase family. Contains an active site 4-methylidene-imidazol-5-one (MIO), which is formed autocatalytically by cyclization and dehydration of residues Ala-Ser-Gly.

The protein localises to the cytoplasm. It carries out the reaction L-histidine = trans-urocanate + NH4(+). Its pathway is amino-acid degradation; L-histidine degradation into L-glutamate; N-formimidoyl-L-glutamate from L-histidine: step 1/3. This chain is Histidine ammonia-lyase, found in Legionella pneumophila (strain Lens).